Consider the following 473-residue polypeptide: Trigger factor (473 aa).

Residues 174–261 form the PPIase FKBP-type domain; it reads GDIAVVSFKG…LKDLKEKELP (88 aa). The disordered stretch occupies residues 437–473; sequence EISEKVTKSTTKSKTKSKTKKESQAKSEPNKKKKEKK. Residues 456-466 are compositionally biased toward basic and acidic residues; the sequence is KKESQAKSEPN.

The protein belongs to the FKBP-type PPIase family. Tig subfamily.

The protein resides in the cytoplasm. The enzyme catalyses [protein]-peptidylproline (omega=180) = [protein]-peptidylproline (omega=0). In terms of biological role, involved in protein export. Acts as a chaperone by maintaining the newly synthesized protein in an open conformation. Functions as a peptidyl-prolyl cis-trans isomerase. This chain is Trigger factor, found in Prochlorococcus marinus (strain MIT 9515).